A 298-amino-acid polypeptide reads, in one-letter code: 4-hydroxy-tetrahydrodipicolinate synthase (298 aa).

Thr-48 contributes to the pyruvate binding site. Tyr-137 functions as the Proton donor/acceptor in the catalytic mechanism. The active-site Schiff-base intermediate with substrate is the Lys-166. Ile-207 serves as a coordination point for pyruvate.

Belongs to the DapA family. Homotetramer; dimer of dimers.

It is found in the cytoplasm. The catalysed reaction is L-aspartate 4-semialdehyde + pyruvate = (2S,4S)-4-hydroxy-2,3,4,5-tetrahydrodipicolinate + H2O + H(+). The protein operates within amino-acid biosynthesis; L-lysine biosynthesis via DAP pathway; (S)-tetrahydrodipicolinate from L-aspartate: step 3/4. Its function is as follows. Catalyzes the condensation of (S)-aspartate-beta-semialdehyde [(S)-ASA] and pyruvate to 4-hydroxy-tetrahydrodipicolinate (HTPA). In Campylobacter jejuni subsp. jejuni serotype O:6 (strain 81116 / NCTC 11828), this protein is 4-hydroxy-tetrahydrodipicolinate synthase.